The following is an 886-amino-acid chain: General transcription factor 3C polypeptide 3 (886 aa).

A disordered region spans residues 1–121; it reads MSGFSPELID…TPEQPTAGDV (121 aa). N-acetylserine is present on Ser2. A compositionally biased stretch (basic and acidic residues) spans 12-44; that stretch reads LEGKISFEEFERRREERKTREKKSLQEKGKLSA. Residue Ser43 is modified to Phosphoserine. Positions 53–63 are enriched in polar residues; it reads VPSSSGINSTK. Residues 92 to 113 are compositionally biased toward acidic residues; it reads ENEDDEEEEEEEEEEEEEEETP. TPR repeat units follow at residues 149-182, 183-216, 217-250, 252-284, 290-323, 326-361, 421-454, 456-489, 491-523, 733-766, and 811-844; these read LRGL…APLA, YEPF…NPSD, TEEW…EPTN, RYLW…LSPS, MQLA…HQGL, MEDV…EKKT, GDLY…ERYN, AVVW…APLH, DARI…DTLA, HALC…HPDE, and QESF…PPLV. Ser282 bears the Phosphoserine mark.

In terms of assembly, part of the TFIIIC subcomplex TFIIIC2, consisting of six subunits, GTF3C1, GTF3C2, GTF3C3, GTF3C4, GTF3C5 and GTF3C6. Interacts with BRF1 and TBP.

It localises to the nucleus. Involved in RNA polymerase III-mediated transcription. Integral, tightly associated component of the DNA-binding TFIIIC2 subcomplex that directly binds tRNA and virus-associated RNA promoters. The polypeptide is General transcription factor 3C polypeptide 3 (GTF3C3) (Homo sapiens (Human)).